Reading from the N-terminus, the 102-residue chain is Large ribosomal subunit protein bL21 (102 aa).

It belongs to the bacterial ribosomal protein bL21 family. Part of the 50S ribosomal subunit. Contacts protein L20.

In terms of biological role, this protein binds to 23S rRNA in the presence of protein L20. This is Large ribosomal subunit protein bL21 from Nitratidesulfovibrio vulgaris (strain DSM 19637 / Miyazaki F) (Desulfovibrio vulgaris).